A 202-amino-acid chain; its full sequence is GMP synthase [glutamine-hydrolyzing] subunit A (202 aa).

Positions 4–194 (KIYVVDNGGQ…IAICQQHKEK (191 aa)) constitute a Glutamine amidotransferase type-1 domain. Cysteine 81 acts as the Nucleophile in catalysis. Active-site residues include histidine 168 and glutamate 170.

In terms of assembly, heterodimer composed of a glutamine amidotransferase subunit (A) and a GMP-binding subunit (B).

The enzyme catalyses XMP + L-glutamine + ATP + H2O = GMP + L-glutamate + AMP + diphosphate + 2 H(+). Its pathway is purine metabolism; GMP biosynthesis; GMP from XMP (L-Gln route): step 1/1. Functionally, catalyzes the synthesis of GMP from XMP. In Thermoplasma volcanium (strain ATCC 51530 / DSM 4299 / JCM 9571 / NBRC 15438 / GSS1), this protein is GMP synthase [glutamine-hydrolyzing] subunit A.